Consider the following 423-residue polypeptide: Gamma-glutamyl phosphate reductase (423 aa).

It belongs to the gamma-glutamyl phosphate reductase family.

The protein resides in the cytoplasm. It carries out the reaction L-glutamate 5-semialdehyde + phosphate + NADP(+) = L-glutamyl 5-phosphate + NADPH + H(+). It participates in amino-acid biosynthesis; L-proline biosynthesis; L-glutamate 5-semialdehyde from L-glutamate: step 2/2. In terms of biological role, catalyzes the NADPH-dependent reduction of L-glutamate 5-phosphate into L-glutamate 5-semialdehyde and phosphate. The product spontaneously undergoes cyclization to form 1-pyrroline-5-carboxylate. The polypeptide is Gamma-glutamyl phosphate reductase (Paraburkholderia xenovorans (strain LB400)).